The chain runs to 231 residues: Somatolactin (231 aa).

The first 24 residues, 1–24 (MNMMTVKQQGVWAALLWPYLLTAS), serve as a signal peptide directing secretion. 3 cysteine pairs are disulfide-bonded: Cys-29–Cys-39, Cys-89–Cys-205, and Cys-222–Cys-230. N-linked (GlcNAc...) asparagine glycosylation occurs at Asn-145.

It belongs to the somatotropin/prolactin family. Pituitary gland.

It is found in the secreted. This chain is Somatolactin, found in Paralichthys olivaceus (Bastard halibut).